Reading from the N-terminus, the 324-residue chain is MANERRTLLLEFEKPLVELEAQIQQVRDKSSEFGVDVSEQIRELEERAKQLRYEIFSKLTPGQTLQVARHPRRPSTLDYIQAISEEWIELHGDRRGSDDPAIVGGIGRLNDQPVVMLGQQKGRDTKDNVARNFGMASPGGYRKALRLMEHANRFQMPILTFIDTPAAWAGVDAEKFGQGEAIAYNLREMFRFEVPIICTVIGEGGSGGALAIGVGDRLLMFEHAVYSVAPPEACAAILWRDAQKAPQAAEALKITARDLLKLGIIDEIVPEPVGAAHSNPVEAAENLKAALLRNLAEVQALSSSERRELRYQKFRRMGVFTEAV.

The CoA carboxyltransferase C-terminal domain occupies 44–297 (LEERAKQLRY…KAALLRNLAE (254 aa)).

Belongs to the AccA family. Acetyl-CoA carboxylase is a heterohexamer composed of biotin carboxyl carrier protein (AccB), biotin carboxylase (AccC) and two subunits each of ACCase subunit alpha (AccA) and ACCase subunit beta (AccD).

Its subcellular location is the cytoplasm. It carries out the reaction N(6)-carboxybiotinyl-L-lysyl-[protein] + acetyl-CoA = N(6)-biotinyl-L-lysyl-[protein] + malonyl-CoA. It participates in lipid metabolism; malonyl-CoA biosynthesis; malonyl-CoA from acetyl-CoA: step 1/1. Its function is as follows. Component of the acetyl coenzyme A carboxylase (ACC) complex. First, biotin carboxylase catalyzes the carboxylation of biotin on its carrier protein (BCCP) and then the CO(2) group is transferred by the carboxyltransferase to acetyl-CoA to form malonyl-CoA. This chain is Acetyl-coenzyme A carboxylase carboxyl transferase subunit alpha, found in Thermosynechococcus vestitus (strain NIES-2133 / IAM M-273 / BP-1).